A 704-amino-acid chain; its full sequence is Cystathionine beta-synthase cbs-1 (704 aa).

Pyridoxal 5'-phosphate contacts are provided by residues Asn454, 562 to 566 (GTGGT), and Ser652.

It belongs to the cysteine synthase/cystathionine beta-synthase family. Monomer. As to quaternary structure, does not bind pyridoxal 5'-phosphate, PLP; which may explain why this isoform has virtually undetectable catalytic activity. Pyridoxal 5'-phosphate serves as cofactor.

Its subcellular location is the cytoplasm. The catalysed reaction is L-homocysteine + L-serine = L,L-cystathionine + H2O. It functions in the pathway amino-acid biosynthesis; L-cysteine biosynthesis; L-cysteine from L-homocysteine and L-serine: step 1/2. Functionally, hydro-lyase catalyzing the first step of the transsulfuration pathway, where the hydroxyl group of L-serine is displaced by L-homocysteine in a beta-replacement reaction to form L-cystathionine, the precursor of L-cysteine. Plays a role in maintaining homocysteine homeostasis. Involved in cold-induced somatic longevity mediated by prostaglandin E2 (PGE2) signals from adult germ cells, perhaps acting via a role in the production of hydrogen sulfide (H2S). Required for normal development. This Caenorhabditis elegans protein is Cystathionine beta-synthase cbs-1.